Reading from the N-terminus, the 404-residue chain is Cysteine desulfurase IscS (404 aa).

Residues 73–74 (AT), N153, Q181, and 201–203 (SAH) contribute to the pyridoxal 5'-phosphate site. At K204 the chain carries N6-(pyridoxal phosphate)lysine. Residue T241 participates in pyridoxal 5'-phosphate binding. C327 (cysteine persulfide intermediate) is an active-site residue. [2Fe-2S] cluster is bound at residue C327.

It belongs to the class-V pyridoxal-phosphate-dependent aminotransferase family. NifS/IscS subfamily. Homodimer. Forms a heterotetramer with IscU, interacts with other sulfur acceptors. Pyridoxal 5'-phosphate is required as a cofactor.

Its subcellular location is the cytoplasm. It catalyses the reaction (sulfur carrier)-H + L-cysteine = (sulfur carrier)-SH + L-alanine. The protein operates within cofactor biosynthesis; iron-sulfur cluster biosynthesis. Functionally, master enzyme that delivers sulfur to a number of partners involved in Fe-S cluster assembly, tRNA modification or cofactor biosynthesis. Catalyzes the removal of elemental sulfur atoms from cysteine to produce alanine. Functions as a sulfur delivery protein for Fe-S cluster synthesis onto IscU, an Fe-S scaffold assembly protein, as well as other S acceptor proteins. This Anaeromyxobacter dehalogenans (strain 2CP-C) protein is Cysteine desulfurase IscS.